The chain runs to 290 residues: Glycine--tRNA ligase alpha subunit (290 aa).

The protein belongs to the class-II aminoacyl-tRNA synthetase family. As to quaternary structure, tetramer of two alpha and two beta subunits.

It localises to the cytoplasm. The catalysed reaction is tRNA(Gly) + glycine + ATP = glycyl-tRNA(Gly) + AMP + diphosphate. The polypeptide is Glycine--tRNA ligase alpha subunit (Gloeobacter violaceus (strain ATCC 29082 / PCC 7421)).